The following is a 328-amino-acid chain: Probable magnesium transporter NIPA6 (328 aa).

Topologically, residues 1–4 (METD) are extracellular. The helical transmembrane segment at 5-25 (NGKGLILAVASSVFIGSSFIL) threads the bilayer. The Cytoplasmic segment spans residues 26–51 (KKKGLKRAGAIGTRAGYGGYTYLLEP). Residues 52–72 (LWWAGMVTMIVGEAANFVAYI) form a helical membrane-spanning segment. At 73 to 76 (YAPA) the chain is on the extracellular side. A helical transmembrane segment spans residues 77–97 (VLVTPLGALSIIISAVLAHFL). Residues 98–104 (LKEKLKK) are Cytoplasmic-facing. The helical transmembrane segment at 105 to 125 (MGVLGCVSCIVGSVVIVIHAP) threads the bilayer. At 126-142 (KEQTPNSVEEIWNLATQ) the chain is on the extracellular side. A helical transmembrane segment spans residues 143–163 (PAFLIYVAITMSIVLALILHF). Residues 164 to 175 (EPLCGQTNILVY) are Cytoplasmic-facing. A helical transmembrane segment spans residues 176 to 196 (IGICSLMGALTVMSIKAIGIA). Residues 197–209 (IKLTMEGVSQIGY) lie on the Extracellular side of the membrane. Residues 210–230 (PQTWLFVMVAVTCVVTQLIYL) traverse the membrane as a helical segment. Residues 231–240 (NKALDTFNAA) lie on the Cytoplasmic side of the membrane. The chain crosses the membrane as a helical span at residues 241 to 261 (IVSPVYYVMFTTLTIVASAIM). Over 262-269 (FKDWSGQD) the chain is Extracellular. A helical transmembrane segment spans residues 270-290 (AASVASELCGFITVLTGTMIL). The Cytoplasmic portion of the chain corresponds to 291–328 (HGTREEEQQQASSEHVRWYDSRKSMNEEHLVSLYSPEY).

The protein belongs to the NIPA (TC 2.A.7) family. In terms of assembly, homodimer.

The protein localises to the cell membrane. It is found in the early endosome. Its function is as follows. Acts as a Mg(2+) transporter. Can also transport other divalent cations such as Fe(2+), Sr(2+), Ba(2+), Mn(2+) and Co(2+) but to a much less extent than Mg(2+). In Arabidopsis thaliana (Mouse-ear cress), this protein is Probable magnesium transporter NIPA6.